A 657-amino-acid chain; its full sequence is 9-cis-epoxycarotenoid dioxygenase NCED9, chloroplastic (657 aa).

Residues H357, H406, H471, and H642 each contribute to the Fe cation site.

It belongs to the carotenoid oxygenase family. Fe(2+) is required as a cofactor. In terms of tissue distribution, expressed in developing siliques, embryo and endosperm.

It localises to the plastid. It is found in the chloroplast stroma. It carries out the reaction a 9-cis-epoxycarotenoid + O2 = a 12'-apo-carotenal + 2-cis,4-trans-xanthoxin. The catalysed reaction is 9-cis-violaxanthin + O2 = (3S,5R,6S)-5,6-epoxy-3-hydroxy-5,6-dihydro-12'-apo-beta-caroten-12'-al + 2-cis,4-trans-xanthoxin. The enzyme catalyses 9'-cis-neoxanthin + O2 = (3S,5R,6R)-3,5-dihydroxy-6,7-didehydro-5,6-dihydro-12'-apo-beta-caroten-12'-al + 2-cis,4-trans-xanthoxin. Functionally, has a 11,12(11',12') 9-cis epoxycarotenoid cleavage activity. Catalyzes the first step of abscisic-acid biosynthesis from carotenoids. Contributes probably to abscisic acid synthesis for the induction of seed dormancy. The chain is 9-cis-epoxycarotenoid dioxygenase NCED9, chloroplastic (NCED9) from Arabidopsis thaliana (Mouse-ear cress).